A 441-amino-acid polypeptide reads, in one-letter code: MAADPLPPSAMVQPGTLNLNNEVVKMRKEVKRIRVLVIRKLVRSVGRLKSKKGTEDALLKNQRRAQRLLEEIHAMKELKPDVVTKSALSDDINFEKTCKKPDSTATDRAVARLAGHPLLKKKIDVLKDAVQAFKDARQSAPAAESSESTSGEGRCKDIARSKDDARESQHPERTVVREQKAKDTNTAAKNAASGSKEKLAKTEQAPRAGTTPGSQGRPSGKGAGVNSEHQGAPAPGDSNQGKASTKTPEDSVCEPANNGVSEEEESEGEKEYFDDSTEERFYKQSSASEDSDSGDDFFIGKVRRTRKKESGVHSSAKELKPLPKVPSKTSTLETPWDVRNDKHRPIPEARKFESVFFHSLAGPKSSRRDPREQAPKNKAPDFPENEPPVKKQFTKSAYRGFESVKQTMQAPLHPSWEASRRRKEQQSKIAVFQGKKITFDD.

Coiled-coil stretches lie at residues 52–77 (KGTE…AMKE) and 118–140 (LLKK…RQSA). 3 disordered regions span residues 137–342 (RQSA…RNDK), 357–389 (FHSL…EPPV), and 406–441 (QTMQ…TFDD). Low complexity predominate over residues 139 to 152 (SAPAAESSESTSGE). A compositionally biased stretch (basic and acidic residues) spans 153–183 (GRCKDIARSKDDARESQHPERTVVREQKAKD). K201 participates in a covalent cross-link: Glycyl lysine isopeptide (Lys-Gly) (interchain with G-Cter in SUMO2). S214 carries the phosphoserine modification. Polar residues predominate over residues 237 to 246 (DSNQGKASTK). The segment covering 269-282 (EKEYFDDSTEERFY) has biased composition (basic and acidic residues). 3 positions are modified to phosphoserine: S276, S291, and S293. Positions 308 to 321 (KESGVHSSAKELKP) are enriched in basic and acidic residues. Residue K328 forms a Glycyl lysine isopeptide (Lys-Gly) (interchain with G-Cter in SUMO2) linkage. A compositionally biased stretch (basic and acidic residues) spans 366–381 (SRRDPREQAPKNKAPD).

Interacts with SRF. Forms complexes with SRF and SRF cofactors ARID2, MYOCD and NKX2-5. Interacts with the N-terminus of SLC2A4. Highly expressed in heart, skeletal muscle, liver, kidney, testis and brain. Also expressed in white adipose tissue. Expression is up-regulated in cardiomyopathic heart.

Its subcellular location is the cytoplasm. It localises to the perinuclear region. In terms of biological role, may be involved in regulating transcriptional activation of cardiac genes during the aging process. May play a role in biosynthesis and/or processing of SLC2A4 in adipose cells. This Mus musculus (Mouse) protein is Serum response factor-binding protein 1.